Here is a 54-residue protein sequence, read N- to C-terminus: Protein PIGBOS1 (54 aa).

At 1–4 the chain is on the mitochondrial intermembrane side; sequence MFRR. Residues 5-25 form a helical membrane-spanning segment; that stretch reads LTFAQLLFATVLGIAGGVYIF. At 26 to 54 the chain is on the cytoplasmic side; the sequence is QPVFEQYAKDQKELKEKMQLVQESEEKKS. The interval 30 to 36 is required for interaction with CLCC1; sequence EQYAKDQ.

Homooligomer. Interacts (via C-terminus) with endoplasmic reticulum (ER) protein CLCC1; the interaction occurs at the mitochondria-associated ER membrane, a zone of contact between the ER and mitochondrial membranes, but does not appear to play a role in ER-mitochondria tethering and is not affected by ER stress.

The protein localises to the mitochondrion outer membrane. Functionally, plays a role in regulation of the unfolded protein response triggered by endoplasmic reticulum (ER) stress resulting from the presence of unfolded proteins in the ER lumen. This is Protein PIGBOS1 from Homo sapiens (Human).